We begin with the raw amino-acid sequence, 104 residues long: 11 kDa late embryogenesis abundant protein (104 aa).

A compositionally biased stretch (low complexity) spans 1-24 (MQSGKNAAASAKETAANVAASAKA). Positions 1–104 (MQSGKNAAAS…TGHRTGTGGI (104 aa)) are disordered. The segment covering 25–74 (GMEKTKASLQEKGEKMTAHDPMQKEMAREKKEERKHEAEYEKQAAKEHNA) has biased composition (basic and acidic residues). The span at 75–89 (AQKQTTGIGTGTHSY) shows a compositional bias: polar residues.

It belongs to the LEA type 1 family. In terms of tissue distribution, maximally expressed in dry seeds. Also present in mid-maturation embryos.

In terms of biological role, LEA proteins are late embryonic proteins abundant in higher plant seed embryos. They may play an essential role in seed survival and in controlling water exchanges during seed desiccation and imbibition. This chain is 11 kDa late embryogenesis abundant protein, found in Helianthus annuus (Common sunflower).